The sequence spans 254 residues: 5'-nucleotidase SurE (254 aa).

Residues aspartate 8, aspartate 9, serine 38, and asparagine 91 each contribute to the a divalent metal cation site.

It belongs to the SurE nucleotidase family. It depends on a divalent metal cation as a cofactor.

The protein localises to the cytoplasm. It carries out the reaction a ribonucleoside 5'-phosphate + H2O = a ribonucleoside + phosphate. Nucleotidase that shows phosphatase activity on nucleoside 5'-monophosphates. The sequence is that of 5'-nucleotidase SurE from Anaeromyxobacter dehalogenans (strain 2CP-1 / ATCC BAA-258).